Reading from the N-terminus, the 205-residue chain is Guanylate kinase (205 aa).

A Guanylate kinase-like domain is found at 5–184 (GLLIVLSGPS…AVQKIKGIVE (180 aa)). Position 12–19 (12–19 (GPSGVGKG)) interacts with ATP.

The protein belongs to the guanylate kinase family.

It is found in the cytoplasm. It carries out the reaction GMP + ATP = GDP + ADP. Essential for recycling GMP and indirectly, cGMP. The protein is Guanylate kinase of Listeria monocytogenes serotype 4b (strain F2365).